The sequence spans 265 residues: Indole-3-glycerol phosphate synthase (265 aa).

This sequence belongs to the TrpC family.

The catalysed reaction is 1-(2-carboxyphenylamino)-1-deoxy-D-ribulose 5-phosphate + H(+) = (1S,2R)-1-C-(indol-3-yl)glycerol 3-phosphate + CO2 + H2O. It functions in the pathway amino-acid biosynthesis; L-tryptophan biosynthesis; L-tryptophan from chorismate: step 4/5. The protein is Indole-3-glycerol phosphate synthase of Xanthomonas oryzae pv. oryzae (strain PXO99A).